A 436-amino-acid polypeptide reads, in one-letter code: N-lysine methyltransferase SMYD2 (436 aa).

Positions 10–244 (GGLERFASPG…PGEEVFTSYI (235 aa)) constitute an SET domain. 20 to 22 (KGR) is a binding site for S-adenosyl-L-methionine. Positions 55, 58, 68, 71, 77, 81, 89, and 93 each coordinate Zn(2+). An MYND-type zinc finger spans residues 55–93 (CDGCFARKEGLSKCGRCKQAFYCNVECQKEDWPMHKLEC). Residues histidine 140, 209-210 (NH), and 261-263 (YFF) contribute to the S-adenosyl-L-methionine site.

Belongs to the class V-like SAM-binding methyltransferase superfamily.

The protein localises to the cytoplasm. It localises to the cytosol. Its subcellular location is the nucleus. It carries out the reaction L-lysyl(4)-[histone H3] + 3 S-adenosyl-L-methionine = N(6),N(6),N(6)-trimethyl-L-lysyl(4)-[histone H3] + 3 S-adenosyl-L-homocysteine + 3 H(+). The enzyme catalyses L-lysyl-[protein] + S-adenosyl-L-methionine = N(6)-methyl-L-lysyl-[protein] + S-adenosyl-L-homocysteine + H(+). Its function is as follows. Protein-lysine N-methyltransferase that methylates both histones and non-histone proteins, including p53/TP53 and RB1. Specifically trimethylates histone H3 'Lys-4' (H3K4me3) in vivo. The activity requires interaction with HSP90alpha. Shows even higher methyltransferase activity on p53/TP53. Monomethylates 'Lys-370' of p53/TP53, leading to decreased DNA-binding activity and subsequent transcriptional regulation activity of p53/TP53. Monomethylates RB1 at 'Lys-860'. This Gallus gallus (Chicken) protein is N-lysine methyltransferase SMYD2 (SMYD2).